The following is a 301-amino-acid chain: MTEKHTTPDGLVIVDKPSGFTSHDVVAKMRGIARTRRVGHAGTLDPMATGVLVLGVERATKLLGHLALTEKEYLGTIRLGQTTLTDDAEGEITGSRDASKVTWEAIDAGVAELSGDIMQVPSKVSAIKIKGVRSYKRAREGEEFEIPARPVTVSSFAVYDVRDAVADDGTPVLDLVVSVTCSSGTYIRALARDLGAGLGVGGHLTALRRTRVGPYKLDGARTLDQLQQELTVMPVADAAGAAFPRWGVDARRARLLANGVRLEMPEEYTGVGAVAVFDPEGRLLALVEEHKGKAKSLAVFG.

Asp-45 acts as the Nucleophile in catalysis.

It belongs to the pseudouridine synthase TruB family. Type 1 subfamily.

The enzyme catalyses uridine(55) in tRNA = pseudouridine(55) in tRNA. Its function is as follows. Responsible for synthesis of pseudouridine from uracil-55 in the psi GC loop of transfer RNAs. This Streptomyces coelicolor (strain ATCC BAA-471 / A3(2) / M145) protein is tRNA pseudouridine synthase B.